The chain runs to 178 residues: Nicotinamide-nucleotide adenylyltransferase (178 aa).

This sequence belongs to the archaeal NMN adenylyltransferase family.

The protein localises to the cytoplasm. The enzyme catalyses beta-nicotinamide D-ribonucleotide + ATP + H(+) = diphosphate + NAD(+). The protein operates within cofactor biosynthesis; NAD(+) biosynthesis; NAD(+) from nicotinamide D-ribonucleotide: step 1/1. The chain is Nicotinamide-nucleotide adenylyltransferase from Pyrobaculum neutrophilum (strain DSM 2338 / JCM 9278 / NBRC 100436 / V24Sta) (Thermoproteus neutrophilus).